A 560-amino-acid chain; its full sequence is Putative transport protein VSAL_I2029 (560 aa).

5 consecutive transmembrane segments (helical) span residues 14–34, 37–57, 66–86, 94–114, and 161–181; these read ILLL…KIGS, LGSS…GYTF, FMLF…GIFL, LLVL…GYYF, and NLSV…ILLA. RCK C-terminal domains follow at residues 203–292 and 293–376; these read RGIG…FRNG and KEVF…KIGF. 5 consecutive transmembrane segments (helical) span residues 386-406, 409-429, 451-471, 478-498, and 539-559; these read LLAF…TMSF, VTFG…LGFL, GLLV…IEYF, VLAA…LVGA, and AGTY…MILL.

The protein belongs to the AAE transporter (TC 2.A.81) family. YbjL subfamily.

Its subcellular location is the cell membrane. In Aliivibrio salmonicida (strain LFI1238) (Vibrio salmonicida (strain LFI1238)), this protein is Putative transport protein VSAL_I2029.